A 667-amino-acid polypeptide reads, in one-letter code: tRNA uridine 5-carboxymethylaminomethyl modification enzyme MnmG (667 aa).

Residue 13–18 (GGGHAG) participates in FAD binding. 280 to 294 (GPRYCPSVEDKINRF) lines the NAD(+) pocket.

It belongs to the MnmG family. As to quaternary structure, homodimer. Heterotetramer of two MnmE and two MnmG subunits. FAD is required as a cofactor.

The protein localises to the cytoplasm. In terms of biological role, NAD-binding protein involved in the addition of a carboxymethylaminomethyl (cmnm) group at the wobble position (U34) of certain tRNAs, forming tRNA-cmnm(5)s(2)U34. The polypeptide is tRNA uridine 5-carboxymethylaminomethyl modification enzyme MnmG (Polaromonas naphthalenivorans (strain CJ2)).